The sequence spans 517 residues: Acyltransferase AFT15-1 (517 aa).

Histidine 180 (proton acceptor) is an active-site residue.

The protein belongs to the plant acyltransferase family.

It functions in the pathway mycotoxin biosynthesis. In terms of biological role, acyltransferase; part of the gene clusters that mediate the biosynthesis of the host-selective toxins (HSTs) AF-toxins responsible for Alternaria black spot of strawberry disease by the strawberry pathotype. AF-toxin I and III are valine derivatives of 2,3-dyhydroxy-isovaleric acid and 2-hydroxy-isovaleric acid respectively, while AF II is an isoleucine derivative of 2-hydroxy-valeric acid. These derivatives are bound to a 9,10-epoxy-8-hydroxy-9-methyl-decatrienoic acid (EDA) moiety. On cellular level, AF-toxins affect plasma membrane of susceptible cells and cause a sudden increase in loss of K(+) after a few minutes of toxin treatment. The aldo-keto reductase AFTS1 catalyzes the conversion of 2-keto-isovaleric acid (2-KIV) to 2-hydroxy-isovaleric acid (2-HIV) by reduction of its ketone to an alcohol. The acyl-CoA ligase AFT1, the hydrolase AFT2 and the enoyl-CoA hydratases AFT3 and AFT6, but also the polyketide synthase AFT9, the acyl-CoA dehydrogenase AFT10, the cytochrome P450 monooxygenase AFT11 and the oxidoreductase AFT12 are all involved in the biosynthesis of the AK-, AF- and ACT-toxin common EDA structural moiety. The exact function of each enzyme, and of additional enzymes identified within the AF-toxin clusters have still to be determined. The protein is Acyltransferase AFT15-1 (AFT15-1) of Alternaria alternata (Alternaria rot fungus).